The following is a 208-amino-acid chain: Cytidylate kinase (208 aa).

7–15 (GPAASGKGT) is a binding site for ATP.

The protein belongs to the cytidylate kinase family. Type 1 subfamily.

It localises to the cytoplasm. It catalyses the reaction CMP + ATP = CDP + ADP. The enzyme catalyses dCMP + ATP = dCDP + ADP. In Xanthobacter autotrophicus (strain ATCC BAA-1158 / Py2), this protein is Cytidylate kinase.